The following is a 120-amino-acid chain: Large ribosomal subunit protein uL18c (120 aa).

Belongs to the universal ribosomal protein uL18 family. Part of the 50S ribosomal subunit; contacts the 5S rRNA.

The protein resides in the plastid. It localises to the chloroplast. In terms of biological role, binds 5S rRNA, forms part of the central protuberance of the 50S subunit. The protein is Large ribosomal subunit protein uL18c (rpl18) of Pyropia yezoensis (Susabi-nori).